Consider the following 139-residue polypeptide: Succinate dehydrogenase assembly factor 2, mitochondrial (139 aa).

Residues 1–28 constitute a mitochondrion transit peptide; sequence MLRKTNLSNITTLLRSARCMNRMPQLRF.

It belongs to the SDHAF2 family. As to quaternary structure, interacts with the flavoprotein subunit within the SDH catalytic dimer.

It localises to the mitochondrion. The protein resides in the mitochondrion matrix. Functionally, plays an essential role in the assembly of succinate dehydrogenase (SDH), an enzyme complex (also referred to as respiratory complex II) that is a component of both the tricarboxylic acid (TCA) cycle and the mitochondrial electron transport chain, and which couples the oxidation of succinate to fumarate with the reduction of ubiquinone (coenzyme Q) to ubiquinol. Required for flavinylation (covalent attachment of FAD) of the flavoprotein subunit of the SDH catalytic dimer. This is Succinate dehydrogenase assembly factor 2, mitochondrial from Schizosaccharomyces pombe (strain 972 / ATCC 24843) (Fission yeast).